The sequence spans 32 residues: Photosystem I reaction center subunit XII (32 aa).

The chain crosses the membrane as a helical span at residues 3 to 23 (SISDGQIVVALISAFIIVILA).

It belongs to the PsaM family.

The protein localises to the plastid. Its subcellular location is the chloroplast thylakoid membrane. This Anthoceros angustus (Hornwort) protein is Photosystem I reaction center subunit XII.